A 299-amino-acid chain; its full sequence is Trans-aconitate 3-methyltransferase (299 aa).

Position 2 is an N-acetylserine (serine 2).

This sequence belongs to the methyltransferase superfamily. Tam family.

The protein resides in the cytoplasm. The enzyme catalyses trans-aconitate + S-adenosyl-L-methionine = (E)-2-(methoxycarbonylmethyl)but-2-enedioate + S-adenosyl-L-homocysteine. Its function is as follows. Catalyzes the S-adenosylmethionine monomethyl esterification of trans-aconitate and 3-isopropylmalate at high affinity and of other molecules like cis-aconitate, isocitrate, and citrate at lower velocities and affinities. The function of trans-aconitate methylation appears to be in reducing the toxicity of this spontaneous breakdown product of cis-aconitate. The role of 3-isopropylmalate methylation is unclear but may represent a metabolic branch at 3-isopropylmalate, where some of the material is taken in the pathway leading to leucine and some is taken in a pathway to the 3-isopropylmalate methyl ester, a molecule that provides a signal to switch from vegetative to invasive growth in response to amino acid starvation. The protein is Trans-aconitate 3-methyltransferase (TMT1) of Saccharomyces cerevisiae (strain ATCC 204508 / S288c) (Baker's yeast).